The primary structure comprises 311 residues: 4-hydroxy-tetrahydrodipicolinate synthase (311 aa).

Residue T51 coordinates pyruvate. The Proton donor/acceptor role is filled by Y140. K168 (schiff-base intermediate with substrate) is an active-site residue. Residue I209 participates in pyruvate binding.

It belongs to the DapA family. Homotetramer; dimer of dimers.

The protein localises to the cytoplasm. It carries out the reaction L-aspartate 4-semialdehyde + pyruvate = (2S,4S)-4-hydroxy-2,3,4,5-tetrahydrodipicolinate + H2O + H(+). It participates in amino-acid biosynthesis; L-lysine biosynthesis via DAP pathway; (S)-tetrahydrodipicolinate from L-aspartate: step 3/4. Catalyzes the condensation of (S)-aspartate-beta-semialdehyde [(S)-ASA] and pyruvate to 4-hydroxy-tetrahydrodipicolinate (HTPA). In Streptococcus pneumoniae (strain Hungary19A-6), this protein is 4-hydroxy-tetrahydrodipicolinate synthase.